A 67-amino-acid polypeptide reads, in one-letter code: MMSKLGVLLTICLLLFPLTVLPMDGDQPADLPALRTQDIATDQSPWFDPVKRCCSRYCWKCIPCCPY.

Positions 1-22 (MMSKLGVLLTICLLLFPLTVLP) are cleaved as a signal peptide. Positions 23–50 (MDGDQPADLPALRTQDIATDQSPWFDPV) are excised as a propeptide. Cystine bridges form between C53–C65, C54–C61, and C58–C64. P63 is subject to 4-hydroxyproline.

This sequence belongs to the conotoxin M superfamily. As to expression, expressed by the venom duct.

Its subcellular location is the secreted. The polypeptide is Conotoxin TsMMSK-011 (Conus tessulatus (Tessellate cone)).